We begin with the raw amino-acid sequence, 401 residues long: Mu-type opioid receptor (401 aa).

Residues 1 to 69 are Extracellular-facing; sequence MDSSAVPANA…CPPTGSPSMI (69 aa). 5 N-linked (GlcNAc...) asparagine glycosylation sites follow: Asn9, Asn12, Asn34, Asn41, and Asn49. A helical membrane pass occupies residues 70 to 94; it reads TAITIMALYSIVCVVGLFGNFLVMY. Residues 95 to 107 are Cytoplasmic-facing; sequence VIVRYTKMKTATN. A helical transmembrane segment spans residues 108–132; that stretch reads IYIFNLALADALATSTLPFQSVNYL. The Extracellular segment spans residues 133-143; it reads MGTWPFGTILC. A disulfide bridge connects residues Cys143 and Cys220. A helical membrane pass occupies residues 144–166; the sequence is KIVISIDYYNMFTSIFTLCTMSV. Topologically, residues 167-186 are cytoplasmic; the sequence is DRYIAVCHPVKALDFRTPRN. Position 169 is a phosphotyrosine (Tyr169). A helical transmembrane segment spans residues 187–208; the sequence is AKIINVCNWILSSAIGLPVMFM. The Extracellular portion of the chain corresponds to 209-231; it reads ATTKYRHGSIDCTLTFSHPTWYW. A helical transmembrane segment spans residues 232 to 256; that stretch reads ENLLKICVFIFAFIMPVLIITVCYG. Over 257 to 280 the chain is Cytoplasmic; sequence LMILRLKSVRMLSGSKEKDRNLRR. A helical transmembrane segment spans residues 281 to 307; it reads ITRMVLVVVAVFIVCWTPIHIYVIIKA. Topologically, residues 308–315 are extracellular; the sequence is LVTIPETT. Residues 316–339 form a helical membrane-spanning segment; it reads FQTVSWHFCIALGYTNSCLNPVLY. An NPxxY; plays a role in stabilizing the activated conformation of the receptor motif is present at residues 335–339; the sequence is NPVLY. The Cytoplasmic segment spans residues 340–401; sequence AFLDENFKRC…NLEAETAPLP (62 aa). Cys354 carries the S-palmitoyl cysteine lipid modification. Residues 365–388 form a disordered region; that stretch reads NSTRIRQNTRDHPSTANTVDRTNH. A Phosphoserine modification is found at Ser366. A Phosphothreonine modification is found at Thr373. At Ser378 the chain carries Phosphoserine. The residue at position 397 (Thr397) is a Phosphothreonine.

This sequence belongs to the G-protein coupled receptor 1 family. As to quaternary structure, forms homooligomers and heterooligomers with other GPCRs, such as OPRD1, OPRK1, OPRL1, NPFFR2, ADRA2A, SSTR2, CNR1 and CCR5 (probably in dimeric forms). Interacts with heterotrimeric G proteins; interaction with a heterotrimeric complex containing GNAI1, GNB1 and GNG2 stabilizes the active conformation of the receptor and increases its affinity for endomorphin-2, the synthetic opioid peptide DAMGO and for morphinan agonists. Interacts with PPL; the interaction disrupts agonist-mediated G-protein activation. Interacts (via C-terminus) with DNAJB4 (via C-terminus). Interacts with calmodulin; the interaction inhibits the constitutive activity of OPRM1; it abolishes basal and attenuates agonist-stimulated G-protein coupling. Interacts with FLNA, PLD2, RANBP9 and WLS and GPM6A. Interacts with RTP4. Interacts with SYP and GNAS. Interacts with RGS9, RGS17, RGS20, RGS4, PPP1R9B and HINT1. Phosphorylated. Differentially phosphorylated in basal and agonist-induced conditions. Agonist-mediated phosphorylation modulates receptor internalization. Phosphorylated by GRK2 in a agonist-dependent manner. Phosphorylation at Tyr-169 requires receptor activation, is dependent on non-receptor protein tyrosine kinase Src and results in a decrease in agonist efficacy by reducing G-protein coupling efficiency. Phosphorylated on tyrosine residues; the phosphorylation is involved in agonist-induced G-protein-independent receptor down-regulation. Phosphorylation at Ser-378 is involved in G-protein-dependent but not beta-arrestin-dependent activation of the ERK pathway. In terms of processing, ubiquitinated. A basal ubiquitination seems not to be related to degradation. Ubiquitination is increased upon formation of OPRM1:OPRD1 oligomers leading to proteasomal degradation; the ubiquitination is diminished by RTP4.

It localises to the cell membrane. The protein resides in the cell projection. The protein localises to the axon. It is found in the perikaryon. Its subcellular location is the dendrite. It localises to the endosome. Its function is as follows. Receptor for endogenous opioids such as beta-endorphin and endomorphin. Receptor for natural and synthetic opioids including morphine, heroin, DAMGO, fentanyl, etorphine, buprenorphin and methadone. Also activated by enkephalin peptides, such as Met-enkephalin or Met-enkephalin-Arg-Phe, with higher affinity for Met-enkephalin-Arg-Phe. Agonist binding to the receptor induces coupling to an inactive GDP-bound heterotrimeric G-protein complex and subsequent exchange of GDP for GTP in the G-protein alpha subunit leading to dissociation of the G-protein complex with the free GTP-bound G-protein alpha and the G-protein beta-gamma dimer activating downstream cellular effectors. The agonist- and cell type-specific activity is predominantly coupled to pertussis toxin-sensitive G(i) and G(o) G alpha proteins, GNAI1, GNAI2, GNAI3 and GNAO1, and to a lesser extent to pertussis toxin-insensitive G alpha proteins GNAZ and GNA15. They mediate an array of downstream cellular responses, including inhibition of adenylate cyclase activity and both N-type and L-type calcium channels, activation of inward rectifying potassium channels, mitogen-activated protein kinase (MAPK), phospholipase C (PLC), phosphoinositide/protein kinase (PKC), phosphoinositide 3-kinase (PI3K) and regulation of NF-kappa-B. Also couples to adenylate cyclase stimulatory G alpha proteins. The selective temporal coupling to G-proteins and subsequent signaling can be regulated by RGSZ proteins, such as RGS9, RGS17 and RGS4. Phosphorylation by members of the GPRK subfamily of Ser/Thr protein kinases and association with beta-arrestins is involved in short-term receptor desensitization. Beta-arrestins associate with the GPRK-phosphorylated receptor and uncouple it from the G-protein thus terminating signal transduction. The phosphorylated receptor is internalized through endocytosis via clathrin-coated pits which involves beta-arrestins. The activation of the ERK pathway occurs either in a G-protein-dependent or a beta-arrestin-dependent manner and is regulated by agonist-specific receptor phosphorylation. Acts as a class A G-protein coupled receptor (GPCR) which dissociates from beta-arrestin at or near the plasma membrane and undergoes rapid recycling. Receptor down-regulation pathways are varying with the agonist and occur dependent or independent of G-protein coupling. Endogenous ligands induce rapid desensitization, endocytosis and recycling. Heterooligomerization with other GPCRs can modulate agonist binding, signaling and trafficking properties. Involved in neurogenesis. The polypeptide is Mu-type opioid receptor (OPRM1) (Pan troglodytes (Chimpanzee)).